Reading from the N-terminus, the 266-residue chain is Orcokinin peptides type B (266 aa).

Residues 1 to 20 form the signal peptide; that stretch reads MTAQMFTIALLLSLSAIAAA. Propeptides lie at residues 21–46, 240–246, and 264–266; these read GTIK…GAPV, DYDVFPD, and NVE.

Belongs to the orcokinin family.

It localises to the secreted. Its function is as follows. Myotropic peptides that enhance both the frequency and amplitude of spontaneous hindgut contractions. This is Orcokinin peptides type B from Procambarus clarkii (Red swamp crayfish).